We begin with the raw amino-acid sequence, 123 residues long: Anti-lipopolysaccharide factor (123 aa).

Positions 1 to 26 are cleaved as a signal peptide; that stretch reads MRTRVMAGLCVALVVMCLYMPQPCEA. Residues C55 and C76 are joined by a disulfide bond.

As to expression, strong expression in hemocytes, heart and muscle, with weaker expression detected in gills and hepatopancreas. No expression detected in eyes.

The protein localises to the secreted. In terms of biological role, binds to bacterial LPS and may specifically inhibit the LPS-mediated activation of the hemolymph coagulation. It has a strong antibacterial effect especially on the growth of Gram-negative bacteria. This chain is Anti-lipopolysaccharide factor, found in Scylla serrata (Mud crab).